Reading from the N-terminus, the 194-residue chain is Fibroblast growth factor 7 (194 aa).

Residues 1–31 (MRKWILTRILPTPLYRPCFHLVCLVGTISLA) form the signal peptide. N-linked (GlcNAc...) asparagine glycosylation is found at asparagine 45 and asparagine 149.

It belongs to the heparin-binding growth factors family. In terms of assembly, interacts with FGFBP1. Interacts with FGFR2. Affinity between fibroblast growth factors (FGFs) and their receptors is increased by heparan sulfate glycosaminoglycans that function as coreceptors.

Growth factor active on keratinocytes. Possible major paracrine effector of normal epithelial cell proliferation. In Rattus norvegicus (Rat), this protein is Fibroblast growth factor 7 (Fgf7).